Here is an 81-residue protein sequence, read N- to C-terminus: MKIKDAINRVRWKYKEKIDDYVIVIKDKLTETGLKEIPFTDIYTVDNNYLYLKGEDTIIPLHRVLMIRRKSDDALIWKRGD.

The protein belongs to the UPF0248 family.

The protein is UPF0248 protein SSO2687 of Saccharolobus solfataricus (strain ATCC 35092 / DSM 1617 / JCM 11322 / P2) (Sulfolobus solfataricus).